The chain runs to 773 residues: Linolenate 9R-lipoxygenase (773 aa).

The Lipoxygenase domain maps to 176-773 (YEWVDSKKKS…LEDLMMSINI (598 aa)). Positions 515, 520, and 773 each coordinate Fe cation.

Belongs to the lipoxygenase family.

The catalysed reaction is (9Z,12Z,15Z)-octadecatrienoate + O2 = (9R,10E,12Z,15Z)-9-hydroperoxyoctadeca-10,12,15-trienoate. The protein operates within lipid metabolism; oxylipin biosynthesis. Catalyzes the conversion of alpha-linoleate to (9R,10E,12Z,15Z)-9-hydroperoxyoctadeca-10,12,15-trienoate in oxylipin biosynthesis. Also converts alpha-linoleate to (9R,10E,12Z)-9-hydroperoxyoctadeca-10,12-dienoate. The protein is Linolenate 9R-lipoxygenase of Nostoc sp. (strain PCC 7120 / SAG 25.82 / UTEX 2576).